The following is a 203-amino-acid chain: Protein-methionine-sulfoxide reductase heme-binding subunit MsrQ (203 aa).

The next 6 membrane-spanning stretches (helical) occupy residues 10 to 30, 42 to 62, 75 to 95, 110 to 130, 147 to 167, and 169 to 189; these read IFVV…MSLL, LGLG…LQKL, LGLW…FFIL, PYII…ITSN, LVYA…RSDL, and EWSI…PAVA.

It belongs to the MsrQ family. In terms of assembly, heterodimer of a catalytic subunit (MsrP) and a heme-binding subunit (MsrQ). FMN serves as cofactor. Heme b is required as a cofactor.

Its subcellular location is the cell inner membrane. In terms of biological role, part of the MsrPQ system that repairs oxidized periplasmic proteins containing methionine sulfoxide residues (Met-O), using respiratory chain electrons. Thus protects these proteins from oxidative-stress damage caused by reactive species of oxygen and chlorine generated by the host defense mechanisms. MsrPQ is essential for the maintenance of envelope integrity under bleach stress, rescuing a wide series of structurally unrelated periplasmic proteins from methionine oxidation. MsrQ provides electrons for reduction to the reductase catalytic subunit MsrP, using the quinone pool of the respiratory chain. In Pseudomonas putida (strain GB-1), this protein is Protein-methionine-sulfoxide reductase heme-binding subunit MsrQ.